Reading from the N-terminus, the 50-residue chain is HLRNHFGSKPFKCNKCNYACVNKSMLNSHMKSHTNVYQYRCADCTYATKY.

C2H2-type zinc fingers lie at residues 1–5 (HLRNH), 11–33 (FKCN…MKSH), and 39–50 (YRCADCTYATKY).

It belongs to the hunchback C2H2-type zinc-finger protein family.

The protein resides in the nucleus. In terms of biological role, gap class segmentation protein that controls development of head structures. This Platynereis dumerilii (Dumeril's clam worm) protein is Protein hunchback (hb).